The following is a 367-amino-acid chain: Lipoyl synthase 2, chloroplastic (367 aa).

Residues cysteine 84, cysteine 89, cysteine 95, cysteine 121, cysteine 125, cysteine 128, and serine 336 each coordinate [4Fe-4S] cluster. The Radical SAM core domain occupies 104-325; the sequence is GEGDGIATAT…KEYGESVGFR (222 aa).

Belongs to the radical SAM superfamily. Lipoyl synthase family. [4Fe-4S] cluster is required as a cofactor.

It is found in the plastid. The protein localises to the chloroplast. It catalyses the reaction [[Fe-S] cluster scaffold protein carrying a second [4Fe-4S](2+) cluster] + N(6)-octanoyl-L-lysyl-[protein] + 2 oxidized [2Fe-2S]-[ferredoxin] + 2 S-adenosyl-L-methionine + 4 H(+) = [[Fe-S] cluster scaffold protein] + N(6)-[(R)-dihydrolipoyl]-L-lysyl-[protein] + 4 Fe(3+) + 2 hydrogen sulfide + 2 5'-deoxyadenosine + 2 L-methionine + 2 reduced [2Fe-2S]-[ferredoxin]. Its pathway is protein modification; protein lipoylation via endogenous pathway; protein N(6)-(lipoyl)lysine from octanoyl-[acyl-carrier-protein]: step 2/2. In terms of biological role, catalyzes the radical-mediated insertion of two sulfur atoms into the C-6 and C-8 positions of the octanoyl moiety bound to the lipoyl domains of lipoate-dependent enzymes, thereby converting the octanoylated domains into lipoylated derivatives. The protein is Lipoyl synthase 2, chloroplastic of Zea mays (Maize).